Reading from the N-terminus, the 1136-residue chain is DNA-directed RNA polymerase I subunit RPA2 (1136 aa).

The segment at 1–24 (MDPGSRWRNLPSGPSLKHLTDPSY) is disordered. Arginine 180 provides a ligand contact to RNA. The loop B stretch occupies residues 194–208 (VRPKWKTRGPGYTHY). The tract at residues 236 to 247 (LNFIYRKELFFL) is loop A. Aspartate 367 provides a ligand contact to RNA. Fork loop regions lie at residues 439 to 453 (LRSK…DSGL) and 474 to 489 (RGAD…VRRL). RNA is bound at residue lysine 890. DNA contacts are provided by arginine 1020 and arginine 1036. Serine 1051 bears the Phosphoserine mark. Residues cysteine 1071, cysteine 1074, cysteine 1099, and cysteine 1102 each coordinate Zn(2+). The C4-type zinc finger occupies 1071–1102 (CVKCGSLLSPLLEKPPPSWSAMRNRKYNCTLC).

It belongs to the RNA polymerase beta chain family. Component of the RNA polymerase I (Pol I) complex consisting of 13 subunits: a ten-subunit catalytic core composed of POLR1A/RPA1, POLR1B/RPA2, POLR1C/RPAC1, POLR1D/RPAC2, POLR1H/RPA12, POLR2E/RPABC1, POLR2F/RPABC2, POLR2H/RPABC3, POLR2K/RPABC4 and POLR2L/RPABC5; a mobile stalk subunit POLR1F/RPA43 protruding from the core and additional subunits homologous to general transcription factors POLR1E/RPA49 and POLR1G/RPA34. Part of Pol I pre-initiation complex (PIC), in which Pol I core assembles with RRN3 and promoter-bound UTBF and SL1/TIF-IB complex.

The protein localises to the nucleus. It is found in the nucleolus. It localises to the chromosome. It catalyses the reaction RNA(n) + a ribonucleoside 5'-triphosphate = RNA(n+1) + diphosphate. In terms of biological role, catalytic core component of RNA polymerase I (Pol I), a DNA-dependent RNA polymerase which synthesizes ribosomal RNA precursors using the four ribonucleoside triphosphates as substrates. Transcribes 47S pre-rRNAs from multicopy rRNA gene clusters, giving rise to 5.8S, 18S and 28S ribosomal RNAs. Pol I-mediated transcription cycle proceeds through transcription initiation, transcription elongation and transcription termination stages. During transcription initiation, Pol I pre-initiation complex (PIC) is recruited by the selectivity factor 1 (SL1/TIF-IB) complex bound to the core promoter that precedes an rDNA repeat unit. The PIC assembly bends the promoter favoring the formation of the transcription bubble and promoter escape. Once the polymerase has escaped from the promoter it enters the elongation phase during which RNA is actively polymerized, based on complementarity with the template DNA strand. Highly processive, assembles in structures referred to as 'Miller trees' where many elongating Pol I complexes queue and transcribe the same rDNA coding regions. At terminator sequences downstream of the rDNA gene, PTRF interacts with Pol I and halts Pol I transcription leading to the release of the RNA transcript and polymerase from the DNA. Forms Pol I active center together with the largest subunit POLR1A/RPA1. Appends one nucleotide at a time to the 3' end of the nascent RNA, with POLR1A/RPA1 contributing a Mg(2+)-coordinating DxDGD motif, and POLR1B/RPA2 providing lysine residues believed to facilitate Watson-Crick base pairing between the incoming nucleotide and the template base. Typically, Mg(2+) ions direct a 5' nucleoside triphosphate to form a phosphodiester bond with the 3' hydroxyl of the preceding nucleotide of the nascent RNA, with the elimination of pyrophosphate. Has proofreading activity: Pauses and backtracks to allow the cleavage of a missincorporated nucleotide via POLR1H/RPA12. High Pol I processivity is associated with decreased transcription fidelity. This Pongo abelii (Sumatran orangutan) protein is DNA-directed RNA polymerase I subunit RPA2 (POLR1B).